Consider the following 220-residue polypeptide: Recombination protein RecR (220 aa).

The segment at 57–72 (CPICFNITDAEKCDVC) adopts a C4-type zinc-finger fold. Positions 80–173 (RTICVVEEPG…AISRIAYGVP (94 aa)) constitute a Toprim domain. The disordered stretch occupies residues 190–220 (LTGRQTVSKPQPPQRPGDEDGADGAAVPASR).

It belongs to the RecR family.

In terms of biological role, may play a role in DNA repair. It seems to be involved in an RecBC-independent recombinational process of DNA repair. It may act with RecF and RecO. This is Recombination protein RecR from Deinococcus radiodurans (strain ATCC 13939 / DSM 20539 / JCM 16871 / CCUG 27074 / LMG 4051 / NBRC 15346 / NCIMB 9279 / VKM B-1422 / R1).